A 329-amino-acid chain; its full sequence is Malate dehydrogenase (329 aa).

Position 12-18 (12-18 (GAAGQIG)) interacts with NAD(+). Residues arginine 93 and arginine 99 each coordinate substrate. Residues asparagine 106, glutamine 113, and 130 to 132 (TGN) each bind NAD(+). Positions 132 and 163 each coordinate substrate. Histidine 188 functions as the Proton acceptor in the catalytic mechanism.

Belongs to the LDH/MDH superfamily. MDH type 2 family.

The catalysed reaction is (S)-malate + NAD(+) = oxaloacetate + NADH + H(+). In terms of biological role, catalyzes the reversible oxidation of malate to oxaloacetate. This Mycobacterium bovis (strain ATCC BAA-935 / AF2122/97) protein is Malate dehydrogenase.